The sequence spans 174 residues: Peptide deformylase (174 aa).

Fe cation-binding residues include Cys-94 and His-136. Glu-137 is an active-site residue. His-140 contributes to the Fe cation binding site.

The protein belongs to the polypeptide deformylase family. Requires Fe(2+) as cofactor.

The catalysed reaction is N-terminal N-formyl-L-methionyl-[peptide] + H2O = N-terminal L-methionyl-[peptide] + formate. Its function is as follows. Removes the formyl group from the N-terminal Met of newly synthesized proteins. Requires at least a dipeptide for an efficient rate of reaction. N-terminal L-methionine is a prerequisite for activity but the enzyme has broad specificity at other positions. This chain is Peptide deformylase, found in Maricaulis maris (strain MCS10) (Caulobacter maris).